The chain runs to 457 residues: tRNA (guanine(37)-N(1))-methyltransferase (457 aa).

S-adenosyl-L-methionine is bound by residues His225, 263-264 (DL), 291-292 (DG), and Asn358.

The protein belongs to the class I-like SAM-binding methyltransferase superfamily. TRM5/TYW2 family. As to quaternary structure, monomer.

Its subcellular location is the mitochondrion matrix. The protein localises to the nucleus. It localises to the cytoplasm. The enzyme catalyses guanosine(37) in tRNA + S-adenosyl-L-methionine = N(1)-methylguanosine(37) in tRNA + S-adenosyl-L-homocysteine + H(+). Its function is as follows. Specifically methylates the N1 position of guanosine-37 in various cytoplasmic and mitochondrial tRNAs. Methylation is not dependent on the nature of the nucleoside 5' of the target nucleoside. This is the first step in the biosynthesis of wybutosine (yW), a modified base adjacent to the anticodon of tRNAs and required for accurate decoding. This is tRNA (guanine(37)-N(1))-methyltransferase from Coprinopsis cinerea (strain Okayama-7 / 130 / ATCC MYA-4618 / FGSC 9003) (Inky cap fungus).